A 1252-amino-acid chain; its full sequence is Myosin-1 (1252 aa).

Residues 1–27 (MAPSKKAGKKVTPASKKSAGQGKVAKA) are disordered. Residues 38-712 (VGVSDMTLLT…TLFALETMRD (675 aa)) enclose the Myosin motor domain. 128–135 (GESGAGKT) contacts ATP. Ser356 is subject to Phosphoserine. The segment at 403 to 485 (IIGILDIFGF…PGIFAALNDA (83 aa)) is actin-binding. IQ domains lie at 716-736 (HNMA…KHEC) and 737-762 (ARRI…YGHQ). Residues 770–953 (RRRFSLLSYR…TVHVASGEPP (184 aa)) form the TH1 domain. Disordered stretches follow at residues 945–1049 (VHVA…PETP) and 1103–1228 (PPKA…PATA). 2 stretches are compositionally biased toward pro residues: residues 989 to 999 (RSVPKPKPVAQ) and 1028 to 1046 (RPPP…PAKP). The SH3 domain maps to 1046–1104 (PETPMYRAKFAFEGQEGEMSLKKDDVVELVEKDDNGWWLVKMDGVEGWAPNNYLELVPP). The span at 1162-1175 (ADTTPASSRPSSAI) shows a compositional bias: polar residues. Pro residues predominate over residues 1178–1193 (KPPPPVAAKPKPPVIP). The span at 1194 to 1203 (VKPSVSAKGP) shows a compositional bias: low complexity. The span at 1204-1215 (AKPPIPTAPRPP) shows a compositional bias: pro residues. Residues 1216–1228 (AASTSRSSKPATA) show a composition bias toward low complexity.

This sequence belongs to the TRAFAC class myosin-kinesin ATPase superfamily. Myosin family. In terms of processing, phosphorylation of the TEDS site (Ser-356) is required for the polarization of the actin cytoskeleton. Phosphorylation probably activates the myosin-I ATPase activity.

The protein resides in the cytoplasm. It localises to the cytoskeleton. Its subcellular location is the actin patch. Functionally, type-I myosin implicated in the organization of the actin cytoskeleton. Required for proper actin cytoskeleton polarization. At the cell cortex, assembles in patch-like structures together with proteins from the actin-polymerizing machinery and promotes actin assembly. Functions as actin nucleation-promoting factor (NPF) for the Arp2/3 complex. This chain is Myosin-1 (MYO1), found in Laccaria bicolor (strain S238N-H82 / ATCC MYA-4686) (Bicoloured deceiver).